Here is a 373-residue protein sequence, read N- to C-terminus: Chorismate synthase (373 aa).

An NADP(+)-binding site is contributed by R46. Residues 123 to 125 (RSS), 251 to 252 (NA), G295, 310 to 314 (KPTPS), and R337 contribute to the FMN site.

This sequence belongs to the chorismate synthase family. The cofactor is FMNH2.

It catalyses the reaction 5-O-(1-carboxyvinyl)-3-phosphoshikimate = chorismate + phosphate. It participates in metabolic intermediate biosynthesis; chorismate biosynthesis; chorismate from D-erythrose 4-phosphate and phosphoenolpyruvate: step 7/7. Functionally, catalyzes the anti-1,4-elimination of the C-3 phosphate and the C-6 proR hydrogen from 5-enolpyruvylshikimate-3-phosphate (EPSP) to yield chorismate, which is the branch point compound that serves as the starting substrate for the three terminal pathways of aromatic amino acid biosynthesis. This reaction introduces a second double bond into the aromatic ring system. This is Chorismate synthase from Methanococcus maripaludis (strain C7 / ATCC BAA-1331).